The primary structure comprises 176 residues: NAD(P)H-quinone oxidoreductase subunit I, chloroplastic (176 aa).

4Fe-4S ferredoxin-type domains are found at residues Gly-55–Glu-84 and Leu-95–Glu-124. 8 residues coordinate [4Fe-4S] cluster: Cys-64, Cys-67, Cys-70, Cys-74, Cys-104, Cys-107, Cys-110, and Cys-114.

Belongs to the complex I 23 kDa subunit family. NDH is composed of at least 16 different subunits, 5 of which are encoded in the nucleus. It depends on [4Fe-4S] cluster as a cofactor.

The protein localises to the plastid. The protein resides in the chloroplast thylakoid membrane. It catalyses the reaction a plastoquinone + NADH + (n+1) H(+)(in) = a plastoquinol + NAD(+) + n H(+)(out). It carries out the reaction a plastoquinone + NADPH + (n+1) H(+)(in) = a plastoquinol + NADP(+) + n H(+)(out). In terms of biological role, NDH shuttles electrons from NAD(P)H:plastoquinone, via FMN and iron-sulfur (Fe-S) centers, to quinones in the photosynthetic chain and possibly in a chloroplast respiratory chain. The immediate electron acceptor for the enzyme in this species is believed to be plastoquinone. Couples the redox reaction to proton translocation, and thus conserves the redox energy in a proton gradient. This is NAD(P)H-quinone oxidoreductase subunit I, chloroplastic from Populus alba (White poplar).